The chain runs to 609 residues: Spore coat protein homolog 1 (609 aa).

Residues Met-1–Ala-17 form the signal peptide. 3 N-linked (GlcNAc...) asparagine glycosylation sites follow: Asn-82, Asn-397, and Asn-440. Positions Thr-527–Trp-547 are disordered. A lipid anchor (GPI-anchor amidated serine) is attached at Ser-584. Residues Ser-585–Phe-609 constitute a propeptide, removed in mature form.

The protein resides in the cell membrane. Functionally, may play a role in cell adhesion. In Rhizopus delemar (strain RA 99-880 / ATCC MYA-4621 / FGSC 9543 / NRRL 43880) (Mucormycosis agent), this protein is Spore coat protein homolog 1.